The chain runs to 221 residues: ATP phosphoribosyltransferase (221 aa).

The protein belongs to the ATP phosphoribosyltransferase family. Short subfamily. As to quaternary structure, heteromultimer composed of HisG and HisZ subunits.

The protein resides in the cytoplasm. The catalysed reaction is 1-(5-phospho-beta-D-ribosyl)-ATP + diphosphate = 5-phospho-alpha-D-ribose 1-diphosphate + ATP. It functions in the pathway amino-acid biosynthesis; L-histidine biosynthesis; L-histidine from 5-phospho-alpha-D-ribose 1-diphosphate: step 1/9. Functionally, catalyzes the condensation of ATP and 5-phosphoribose 1-diphosphate to form N'-(5'-phosphoribosyl)-ATP (PR-ATP). Has a crucial role in the pathway because the rate of histidine biosynthesis seems to be controlled primarily by regulation of HisG enzymatic activity. This Neisseria gonorrhoeae (strain ATCC 700825 / FA 1090) protein is ATP phosphoribosyltransferase.